A 390-amino-acid polypeptide reads, in one-letter code: S-adenosylmethionine synthase 3 (390 aa).

A Mg(2+)-binding site is contributed by Glu9. Residue His15 coordinates ATP. Residue Glu43 participates in K(+) binding. L-methionine-binding residues include Glu56 and Gln99. Residues Asp167–Lys169, Ser235–Phe238, Asp246, Arg252–Lys253, Ala269, Lys273, and Lys277 contribute to the ATP site. Asp246 is a binding site for L-methionine. Lys277 lines the L-methionine pocket.

It belongs to the AdoMet synthase family. As to quaternary structure, homotetramer. Requires Mn(2+) as cofactor. The cofactor is Mg(2+). Co(2+) is required as a cofactor. K(+) serves as cofactor. As to expression, mostly expressed in stems and leaves.

The protein localises to the cytoplasm. The enzyme catalyses L-methionine + ATP + H2O = S-adenosyl-L-methionine + phosphate + diphosphate. Its pathway is amino-acid biosynthesis; S-adenosyl-L-methionine biosynthesis; S-adenosyl-L-methionine from L-methionine: step 1/1. In terms of biological role, catalyzes the formation of S-adenosylmethionine from methionine and ATP. The reaction comprises two steps that are both catalyzed by the same enzyme: formation of S-adenosylmethionine (AdoMet) and triphosphate, and subsequent hydrolysis of the triphosphate. The polypeptide is S-adenosylmethionine synthase 3 (SAM3) (Solanum lycopersicum (Tomato)).